A 127-amino-acid polypeptide reads, in one-letter code: Ribonuclease VapC9 (127 aa).

Residues 2 to 115 enclose the PINc domain; the sequence is IVVDASAALA…VTADLRLSDT (114 aa). 2 residues coordinate Mg(2+): Asp-5 and Asp-91.

The protein belongs to the PINc/VapC protein family. Mg(2+) is required as a cofactor.

In terms of biological role, toxic component of a type II toxin-antitoxin (TA) system. An RNase. The cognate antitoxin is VapB9. The sequence is that of Ribonuclease VapC9 from Mycobacterium tuberculosis (strain CDC 1551 / Oshkosh).